Reading from the N-terminus, the 380-residue chain is Sialidase-2 (380 aa).

The FRIP motif motif lies at 20–23 (YRIP). Arg-21 and Arg-41 together coordinate substrate. The Proton acceptor role is filled by Asp-46. The stretch at 127 to 138 (VTSTDHGRTWSS) is one BNR 1 repeat. Residues Tyr-179 and Tyr-181 each coordinate substrate. The stretch at 197 to 208 (FLSHDHGRTWAR) is one BNR 2 repeat. Substrate-binding residues include Glu-218, Arg-237, and Arg-304. The active-site Nucleophile is Tyr-334. Glu-355 is an active-site residue.

It belongs to the glycosyl hydrolase 33 family. As to expression, expressed in skeletal muscle, fetal liver and embryonic carcinoma cell line NT2-D1.

It localises to the cytoplasm. The protein resides in the cytosol. It catalyses the reaction Hydrolysis of alpha-(2-&gt;3)-, alpha-(2-&gt;6)-, alpha-(2-&gt;8)- glycosidic linkages of terminal sialic acid residues in oligosaccharides, glycoproteins, glycolipids, colominic acid and synthetic substrates.. It carries out the reaction a ganglioside GD1a + H2O = a ganglioside GM1 + N-acetylneuraminate. The catalysed reaction is a ganglioside GM1 + H2O = a ganglioside GA1 + N-acetylneuraminate. The enzyme catalyses a ganglioside GT1b + H2O = a ganglioside GD1b + N-acetylneuraminate. It catalyses the reaction a ganglioside GD1b + H2O = a ganglioside GM1 + N-acetylneuraminate. It carries out the reaction a ganglioside GD3 + H2O = a ganglioside GM3 + N-acetylneuraminate. The catalysed reaction is a ganglioside GM3 + H2O = a beta-D-galactosyl-(1-&gt;4)-beta-D-glucosyl-(1&lt;-&gt;1)-ceramide + N-acetylneuraminate. The enzyme catalyses a ganglioside GM2 + H2O = a ganglioside GA2 + N-acetylneuraminate. It catalyses the reaction a neolactoside IV(3)-alpha-NeuAc-nLc4Cer(d18:1(4E)) + H2O = a neolactoside nLc4Cer(d18:1(4E)) + N-acetylneuraminate. It carries out the reaction N-acetyl-alpha-neuraminosyl-(2-&gt;3)-beta-D-galactosyl-(1-&gt;4)-D-glucose + H2O = lactose + N-acetylneuraminate. Its function is as follows. Exo-alpha-sialidase that catalyzes the hydrolytic cleavage of the terminal sialic acid (N-acetylneuraminic acid, Neu5Ac) of a glycan moiety in the catabolism of glycolipids, glycoproteins and oligosacharides. Recognizes sialyl linkage positions of the glycan moiety as well as the supramolecular organization of the sialoglycoconjugate. Displays preference for alpha-(2-&gt;3)-sialylated GD1a and GT1B gangliosides over alpha-(2-&gt;8)-sialylated GD1b, in both monomeric forms and micelles. Hydrolyzes monomeric GM1 ganglioside, but has no activity toward the miscellar form. Has lower sialidase activity for glycoproteins such as fetuin and TF/transferrin that carry a mixture of alpha-(2-&gt;3) and alpha-(2-&gt;6)-sialyl linkages. Cleaves milk oligosaccharide alpha-(2-&gt;3)-sialyllactose, but is inactive toward alpha-(2-&gt;6)-sialyllactose isomer. Has no activity toward colominic acid, a homomer of alpha-(2-&gt;8)-linked Neu5Ac residues. This Homo sapiens (Human) protein is Sialidase-2 (NEU2).